The primary structure comprises 144 residues: Large ribosomal subunit protein uL14 (144 aa).

Positions 107–144 (NEGYTHSQHSNQREGGERIQAQPSPPHARRAVKTSFCR) are disordered.

This sequence belongs to the universal ribosomal protein uL14 family. Part of the 50S ribosomal subunit. Forms a cluster with proteins L3 and L19. In the 70S ribosome, L14 and L19 interact and together make contacts with the 16S rRNA in bridges B5 and B8.

In terms of biological role, binds to 23S rRNA. Forms part of two intersubunit bridges in the 70S ribosome. The protein is Large ribosomal subunit protein uL14 of Xanthobacter autotrophicus (strain ATCC BAA-1158 / Py2).